We begin with the raw amino-acid sequence, 165 residues long: AIG2-like protein A (165 aa).

Residue 15 to 20 (YGSFQD) participates in substrate binding. E83 functions as the Proton acceptor in the catalytic mechanism.

The protein belongs to the gamma-glutamylcyclotransferase family. In terms of tissue distribution, expressed only in seeds.

Its function is as follows. Putative gamma-glutamylcyclotransferase. This is AIG2-like protein A from Arabidopsis thaliana (Mouse-ear cress).